Here is a 726-residue protein sequence, read N- to C-terminus: WD repeat and coiled-coil-containing protein (726 aa).

WD repeat units lie at residues 55–98 (GQFE…LDKN) and 154–194 (KSSG…LNAC). The disordered stretch occupies residues 503–571 (SYDGDQSPTS…SSPPNFIKHG (69 aa)). Residues 506–515 (GDQSPTSSAN) are compositionally biased toward polar residues. Basic and acidic residues predominate over residues 517 to 535 (FDDKRSKLRVESLDTEPKN). Over residues 550 to 565 (SRPTSPKSECQKSSPP) the composition is skewed to polar residues. The stretch at 581-609 (SISRNVERLCCNFAHLQQHLSELTDITRN) forms a coiled coil.

This is WD repeat and coiled-coil-containing protein (wdcp) from Xenopus tropicalis (Western clawed frog).